Here is a 141-residue protein sequence, read N- to C-terminus: uncharacterized protein (141 aa).

Residues 1 to 17 (MNKSESENDSEYHKEYS) are compositionally biased toward basic and acidic residues. The interval 1–24 (MNKSESENDSEYHKEYSESSDPED) is disordered. A coiled-coil region spans residues 52 to 115 (IQNLNNNVKE…QMLFEKMRDM (64 aa)).

This is an uncharacterized protein from Acanthamoeba polyphaga (Amoeba).